Here is a 330-residue protein sequence, read N- to C-terminus: MAAAAMAGAADPPHLTEAKKLEYFSSINSMARKIMQEREKIKETYGSAWSQMSPVEQDTAIDNGMMDPRIRARYAMHRVDRDEVICYPKLLIQTGQKIVHFGEEDLTWQDEHSAPFSWETKSQMDFSISNMTELFVPPSVNEPKPKTSQTTKPPSNDESSFWKISAERSRLDNEKAEFPSLTPSQIKSLEKGEKPLPSYLRLESGSRDMEEVPVSRPAKQRAPKPPAPPPPPPVPISMTPAAISVTPTPPAPVPSLEEGWERAQSTLPSVSSTTDEVFSPGLVTRSSSQSNSTVKDVEKAEASPASSPTFSQFNTSSSILKTGFDFLDNW.

Disordered regions lie at residues Val-136–Ser-160 and Asp-172–Asn-314. Residues Pro-223–Pro-235 are compositionally biased toward pro residues. A compositionally biased stretch (low complexity) spans Ile-236–Thr-246. Polar residues-rich tracts occupy residues Ala-263–Glu-276, Thr-284–Val-294, and Pro-304–Asn-314.

This is an uncharacterized protein from Danio rerio (Zebrafish).